The sequence spans 571 residues: Urease subunit alpha (571 aa).

In terms of domain architecture, Urease spans 131–571; that stretch reads GGIDAHIHFI…LPMAQRYFLF (441 aa). Residues His-136, His-138, and Lys-219 each contribute to the Ni(2+) site. At Lys-219 the chain carries N6-carboxylysine. Position 221 (His-221) interacts with substrate. The Ni(2+) site is built by His-248 and His-274. The active-site Proton donor is the His-322. Asp-362 is a Ni(2+) binding site.

It belongs to the metallo-dependent hydrolases superfamily. Urease alpha subunit family. Heterotrimer of UreA (gamma), UreB (beta) and UreC (alpha) subunits. Three heterotrimers associate to form the active enzyme. Ni cation is required as a cofactor. Post-translationally, carboxylation allows a single lysine to coordinate two nickel ions.

The protein resides in the cytoplasm. The enzyme catalyses urea + 2 H2O + H(+) = hydrogencarbonate + 2 NH4(+). It functions in the pathway nitrogen metabolism; urea degradation; CO(2) and NH(3) from urea (urease route): step 1/1. The chain is Urease subunit alpha from Nostoc punctiforme (strain ATCC 29133 / PCC 73102).